The primary structure comprises 396 residues: NADH-quinone oxidoreductase subunit D (396 aa).

It belongs to the complex I 49 kDa subunit family. In terms of assembly, NDH-1 is composed of 14 different subunits. Subunits NuoB, C, D, E, F, and G constitute the peripheral sector of the complex.

It localises to the cell inner membrane. The enzyme catalyses a quinone + NADH + 5 H(+)(in) = a quinol + NAD(+) + 4 H(+)(out). NDH-1 shuttles electrons from NADH, via FMN and iron-sulfur (Fe-S) centers, to quinones in the respiratory chain. The immediate electron acceptor for the enzyme in this species is believed to be ubiquinone. Couples the redox reaction to proton translocation (for every two electrons transferred, four hydrogen ions are translocated across the cytoplasmic membrane), and thus conserves the redox energy in a proton gradient. The protein is NADH-quinone oxidoreductase subunit D of Bartonella tribocorum (strain CIP 105476 / IBS 506).